Reading from the N-terminus, the 329-residue chain is DNA-directed RNA polymerase subunit alpha (329 aa).

An alpha N-terminal domain (alpha-NTD) region spans residues 1-235 (MQGSVTEFLK…EQLDAFVDLR (235 aa)). Positions 249-329 (FDPILLRPVD…NWPPASIAED (81 aa)) are alpha C-terminal domain (alpha-CTD).

This sequence belongs to the RNA polymerase alpha chain family. As to quaternary structure, homodimer. The RNAP catalytic core consists of 2 alpha, 1 beta, 1 beta' and 1 omega subunit. When a sigma factor is associated with the core the holoenzyme is formed, which can initiate transcription.

The catalysed reaction is RNA(n) + a ribonucleoside 5'-triphosphate = RNA(n+1) + diphosphate. DNA-dependent RNA polymerase catalyzes the transcription of DNA into RNA using the four ribonucleoside triphosphates as substrates. The protein is DNA-directed RNA polymerase subunit alpha of Photobacterium profundum (strain SS9).